The sequence spans 217 residues: Uracil-DNA glycosylase (217 aa).

Catalysis depends on aspartate 62, which acts as the Proton acceptor.

This sequence belongs to the uracil-DNA glycosylase (UDG) superfamily. UNG family.

It is found in the cytoplasm. It catalyses the reaction Hydrolyzes single-stranded DNA or mismatched double-stranded DNA and polynucleotides, releasing free uracil.. Its function is as follows. Excises uracil residues from the DNA which can arise as a result of misincorporation of dUMP residues by DNA polymerase or due to deamination of cytosine. The polypeptide is Uracil-DNA glycosylase (Streptococcus pneumoniae serotype 19F (strain G54)).